A 122-amino-acid polypeptide reads, in one-letter code: Large ribosomal subunit protein uL14 (122 aa).

Belongs to the universal ribosomal protein uL14 family. As to quaternary structure, part of the 50S ribosomal subunit. Forms a cluster with proteins L3 and L19. In the 70S ribosome, L14 and L19 interact and together make contacts with the 16S rRNA in bridges B5 and B8.

Functionally, binds to 23S rRNA. Forms part of two intersubunit bridges in the 70S ribosome. In Chloroflexus aggregans (strain MD-66 / DSM 9485), this protein is Large ribosomal subunit protein uL14.